Consider the following 194-residue polypeptide: MGLYLGVEGIDGVGKSSVVNLAAEFLEIHGLEVTTVREPSTDIGREALEWDDPYLQALAFTLDRMLTLKRVDFEAADVVLSDRTFLSTLAYQSALGADMRWLLELQRPVPKPDVVYIIDREPLAEDATFDKEFLERVRNRYREAARLIEEEFDVEIKWIEAEDMDKEEIAELIVADARRRLDDPLGIPDDLLEG.

9-16 serves as a coordination point for ATP; the sequence is GIDGVGKS.

The protein belongs to the thymidylate kinase family.

It catalyses the reaction dTMP + ATP = dTDP + ADP. The protein is Probable thymidylate kinase of Methanopyrus kandleri (strain AV19 / DSM 6324 / JCM 9639 / NBRC 100938).